Consider the following 184-residue polypeptide: Flavodoxin FldP (184 aa).

The region spanning 4–176 (AVVVYFSGYG…TVKLYAARVA (173 aa)) is the Flavodoxin-like domain. Residues 10 to 14 (SGYGH) and 91 to 147 (GFTN…SVGA) each bind FMN.

It belongs to the FldP flavodoxin family. Requires FMN as cofactor.

Its function is as follows. Flavodoxins are low-potential electron donors to a number of redox enzymes. FldP protects the cell from oxidative stress and reactive oxygen species (ROS) damage, thereby expanding the capabilities of P.aeruginosa to thrive in hostile environments, and contributes to bacterial survival within the host. In vitro, is able to mediate ferredoxin-NADP(H) reductase (FNR)-driven cytochrome c reduction. The sequence is that of Flavodoxin FldP from Pseudomonas aeruginosa (strain UCBPP-PA14).